Reading from the N-terminus, the 645-residue chain is Acetyl-coenzyme A synthetase 2 (645 aa).

CoA is bound by residues 190-193 (RGGK), Thr308, and Asn332. ATP-binding positions include 384–386 (GEP), 408–413 (DTWWQT), Asp497, and Arg512. CoA is bound at residue Ser520. An ATP-binding site is contributed by Arg523. Mg(2+)-binding residues include Val534, His536, and Val539. Lys606 is modified (N6-acetyllysine).

The protein belongs to the ATP-dependent AMP-binding enzyme family. Mg(2+) serves as cofactor. Post-translationally, acetylated. Deacetylation by the SIR2-homolog deacetylase activates the enzyme.

It catalyses the reaction acetate + ATP + CoA = acetyl-CoA + AMP + diphosphate. Its function is as follows. Catalyzes the conversion of acetate into acetyl-CoA (AcCoA), an essential intermediate at the junction of anabolic and catabolic pathways. AcsA undergoes a two-step reaction. In the first half reaction, AcsA combines acetate with ATP to form acetyl-adenylate (AcAMP) intermediate. In the second half reaction, it can then transfer the acetyl group from AcAMP to the sulfhydryl group of CoA, forming the product AcCoA. This Pseudomonas aeruginosa (strain ATCC 15692 / DSM 22644 / CIP 104116 / JCM 14847 / LMG 12228 / 1C / PRS 101 / PAO1) protein is Acetyl-coenzyme A synthetase 2.